The chain runs to 292 residues: Elongation factor Ts (292 aa).

Residues 79–82 form an involved in Mg(2+) ion dislocation from EF-Tu region; sequence TDFV.

The protein belongs to the EF-Ts family.

The protein localises to the cytoplasm. Associates with the EF-Tu.GDP complex and induces the exchange of GDP to GTP. It remains bound to the aminoacyl-tRNA.EF-Tu.GTP complex up to the GTP hydrolysis stage on the ribosome. The polypeptide is Elongation factor Ts (Xylella fastidiosa (strain Temecula1 / ATCC 700964)).